The chain runs to 1033 residues: Immunoglobulin superfamily member 2 (1033 aa).

Residues 1-20 (MACILCVASLFLSLTKFSIG) form the signal peptide. The Extracellular portion of the chain corresponds to 21-970 (QREVKIQEGP…VSSLICSSGP (950 aa)). 7 Ig-like C2-type domains span residues 22 to 141 (REVK…TNLT), 144 to 266 (PDTL…TLIT), 279 to 388 (PAAR…TQMG), 408 to 529 (PAAR…QKIS), 539 to 657 (LRVN…ARVS), 670 to 797 (PESK…RKTS), and 806 to 941 (PTGS…KWIN). Cysteines 43 and 121 form a disulfide. N-linked (GlcNAc...) asparagine glycosylation occurs at Asn139. A disulfide bond links Cys168 and Cys249. Positions 253-255 (EWI) match the EWI motif motif. 3 cysteine pairs are disulfide-bonded: Cys304-Cys377, Cys432-Cys509, and Cys560-Cys638. An N-linked (GlcNAc...) asparagine glycan is attached at Asn677. Cystine bridges form between Cys695–Cys776 and Cys832–Cys925. Residues 971–991 (LLHFLIVCPFVMLLLLATSFL) traverse the membrane as a helical segment. The Cytoplasmic segment spans residues 992–1033 (CLYRKARKLSQLSLSAKKEKALWVGMRKTSLQKEAGEESGHY).

In terms of processing, N-glycosylated.

It localises to the membrane. In terms of biological role, plays a role as inhibitor of T-cells proliferation induced by CD3. Inhibits expression of IL2RA on activated T-cells and secretion of IL2. Inhibits tyrosine kinases that are required for IL2 production and cellular proliferation. Inhibits phospholipase C-gamma-1/PLCG1 phosphorylation and subsequent CD3-induced changes in intracellular free calcium. Prevents nuclear translocation of nuclear factor of activated T-cell to the nucleus. Plays a role in the inhibition of T-cell proliferation via IL10 secretion by cutaneous dendritic cells. This is Immunoglobulin superfamily member 2 (Cd101) from Mus musculus (Mouse).